A 352-amino-acid chain; its full sequence is S-adenosylmethionine:tRNA ribosyltransferase-isomerase (352 aa).

The protein belongs to the QueA family. As to quaternary structure, monomer.

The protein localises to the cytoplasm. It carries out the reaction 7-aminomethyl-7-carbaguanosine(34) in tRNA + S-adenosyl-L-methionine = epoxyqueuosine(34) in tRNA + adenine + L-methionine + 2 H(+). Its pathway is tRNA modification; tRNA-queuosine biosynthesis. Functionally, transfers and isomerizes the ribose moiety from AdoMet to the 7-aminomethyl group of 7-deazaguanine (preQ1-tRNA) to give epoxyqueuosine (oQ-tRNA). This Gloeobacter violaceus (strain ATCC 29082 / PCC 7421) protein is S-adenosylmethionine:tRNA ribosyltransferase-isomerase.